A 186-amino-acid chain; its full sequence is Lipid A palmitoyltransferase PagP (186 aa).

Residues 1–25 (MNVSKYVAIFSFVFIQLISVGKVFA) form the signal peptide. Active-site residues include histidine 58, aspartate 101, and serine 102.

It belongs to the lipid A palmitoyltransferase family. Homodimer.

It localises to the cell outer membrane. The catalysed reaction is lipid A (E. coli) + a 1-hexadecanoyl-2-acyl-sn-glycero-3-phosphocholine = hepta-acyl lipid A (E. coli) + a 2-acyl-sn-glycero-3-phosphocholine. It catalyses the reaction lipid IIA + a 1-hexadecanoyl-2-acyl-sn-glycero-3-phosphocholine = lipid IIB + a 2-acyl-sn-glycero-3-phosphocholine. The enzyme catalyses lipid IVA (E. coli) + a 1-hexadecanoyl-2-acyl-sn-glycero-3-phosphocholine = lipid IVB (E. coli) + a 2-acyl-sn-glycero-3-phosphocholine. Inhibited by lauryldimethylamine oxide (LDAO) and dodecylphosphocholine (DPC). Its function is as follows. Transfers a palmitate residue from the sn-1 position of a phospholipid to the N-linked hydroxymyristate on the proximal unit of lipid A or its precursors. Phosphatidylglycerol (PtdGro), phosphatidylethanolamine (PtdEtn), phosphatidylserine (PtdSer) and phosphatidic acid (Ptd-OH) are all effective acyl donors. The chain is Lipid A palmitoyltransferase PagP from Escherichia coli (strain K12).